A 372-amino-acid polypeptide reads, in one-letter code: Cytochrome b (372 aa).

4 consecutive transmembrane segments (helical) span residues 29–49 (FGSM…ILSW), 73–95 (WFIR…LHIL), 108–128 (VWYS…LGYV), and 174–194 (FFSF…IHLI). Histidine 79 and histidine 93 together coordinate heme b. 2 residues coordinate heme b: histidine 178 and histidine 192. Histidine 197 is a binding site for a ubiquinone. 4 helical membrane passes run 220 to 240 (FSLK…FCIF), 284 to 301 (LGGV…VFLG), 311 to 336 (MVKT…IMGG), and 344 to 363 (DILG…IMLL).

This sequence belongs to the cytochrome b family. In terms of assembly, the main subunits of complex b-c1 are: cytochrome b, cytochrome c1 and the Rieske protein. Heme b serves as cofactor.

Its subcellular location is the mitochondrion inner membrane. Functionally, component of the ubiquinol-cytochrome c reductase complex (complex III or cytochrome b-c1 complex) that is part of the mitochondrial respiratory chain. The b-c1 complex mediates electron transfer from ubiquinol to cytochrome c. Contributes to the generation of a proton gradient across the mitochondrial membrane that is then used for ATP synthesis. This Leptorhynchoides thecatus (Thorny-headed worm) protein is Cytochrome b (mt:Cyt-b).